We begin with the raw amino-acid sequence, 125 residues long: Large ribosomal subunit protein bL12 (125 aa).

Belongs to the bacterial ribosomal protein bL12 family. In terms of assembly, homodimer. Part of the ribosomal stalk of the 50S ribosomal subunit. Forms a multimeric L10(L12)X complex, where L10 forms an elongated spine to which 2 to 4 L12 dimers bind in a sequential fashion. Binds GTP-bound translation factors.

In terms of biological role, forms part of the ribosomal stalk which helps the ribosome interact with GTP-bound translation factors. Is thus essential for accurate translation. This Liberibacter africanus (Citrus greening disease) protein is Large ribosomal subunit protein bL12.